Here is a 297-residue protein sequence, read N- to C-terminus: N-acetylneuraminate lyase (297 aa).

Positions 47 and 48 each coordinate aceneuramate. Tyr137 acts as the Proton donor in catalysis. The active-site Schiff-base intermediate with substrate is Lys165. Aceneuramate is bound by residues Thr167, Gly189, Asp191, Glu192, and Ser208.

The protein belongs to the DapA family. NanA subfamily. Homotetramer.

It localises to the cytoplasm. The enzyme catalyses aceneuramate = aldehydo-N-acetyl-D-mannosamine + pyruvate. Its pathway is amino-sugar metabolism; N-acetylneuraminate degradation; D-fructose 6-phosphate from N-acetylneuraminate: step 1/5. In terms of biological role, catalyzes the reversible aldol cleavage of N-acetylneuraminic acid (sialic acid; Neu5Ac) to form pyruvate and N-acetylmannosamine (ManNAc) via a Schiff base intermediate. This Shigella boydii serotype 4 (strain Sb227) protein is N-acetylneuraminate lyase.